Reading from the N-terminus, the 461-residue chain is Calcitonin gene-related peptide type 1 receptor (461 aa).

A signal peptide spans 1-22; sequence MEKKCTLYFLVLLPFFMILVTA. At 23-139 the chain is on the extracellular side; it reads ELEESPEDSI…NTHEKVKTAL (117 aa). 3 disulfide bridges follow: C48–C74, C65–C105, and C88–C127. N-linked (GlcNAc...) asparagine glycosylation is found at N66, N118, and N123. The chain crosses the membrane as a helical span at residues 140–164; it reads NLFYLTIIGHGLSIASLLISLGIFF. Topologically, residues 165–175 are cytoplasmic; that stretch reads YFKSLSCQRIT. A helical membrane pass occupies residues 176-198; the sequence is LHKNLFFSFVCNSVVTIIHLTAV. At 199–209 the chain is on the extracellular side; sequence ANNQALVATNP. A helical membrane pass occupies residues 210 to 238; sequence VSCKVSQFIHLYLMGCNYFWMLCEGIYLH. Topologically, residues 239–252 are cytoplasmic; the sequence is TLIVVAVFAEKQHL. The chain crosses the membrane as a helical span at residues 253 to 273; that stretch reads MWYYFLGWGFPLIPACIHAIA. Residues 274–289 lie on the Extracellular side of the membrane; sequence RSLYYNDNCWISSDTH. Positions 288–289 are required for RAMP3 interaction; that stretch reads TH. Residues 290 to 314 form a helical membrane-spanning segment; the sequence is LLYIIHGPICAALLVNLFFLLNIVR. Residues 315 to 329 lie on the Cytoplasmic side of the membrane; it reads VLITKLKVTHQAESN. A helical membrane pass occupies residues 330 to 351; the sequence is LYMKAVRATLILVPLLGIEFVL. Topologically, residues 352 to 366 are extracellular; sequence IPWRPEGKIAEEVYD. The chain crosses the membrane as a helical span at residues 367–387; it reads YIMHILMHFQGLLVSTIFCFF. Residues S420 and S445 each carry the phosphoserine modification.

The protein belongs to the G-protein coupled receptor 2 family. Heterodimer of CALCRL and RAMP1; the receptor complex functions as CGRP receptor. Heterodimer of CALCRL and RAMP2 or CALCRL and RAMP3; the complexes function as adrenomedullin receptor. Predominantly expressed in the lung and heart.

It is found in the cell membrane. Functionally, g protein-coupled receptor which specificity is determined by its interaction with receptor-activity-modifying proteins (RAMPs). Together with RAMP1, form the receptor complex for calcitonin-gene-related peptides CALCA/CGRP1 and CALCB/CGRP2. Together with RAMP2 or RAMP3, function as receptor complexes for adrenomedullin (ADM and ADM2). Ligand binding causes a conformation change that triggers signaling via guanine nucleotide-binding proteins (G proteins) and modulates the activity of downstream effectors. Activates cAMP-dependent pathway. The protein is Calcitonin gene-related peptide type 1 receptor of Homo sapiens (Human).